The following is a 446-amino-acid chain: Phosphoglucosamine mutase (446 aa).

Ser103 serves as the catalytic Phosphoserine intermediate. Mg(2+) is bound by residues Ser103, Asp242, Asp244, and Asp246. The residue at position 103 (Ser103) is a Phosphoserine.

The protein belongs to the phosphohexose mutase family. Requires Mg(2+) as cofactor. Post-translationally, activated by phosphorylation.

The catalysed reaction is alpha-D-glucosamine 1-phosphate = D-glucosamine 6-phosphate. Its function is as follows. Catalyzes the conversion of glucosamine-6-phosphate to glucosamine-1-phosphate. The polypeptide is Phosphoglucosamine mutase (Corynebacterium urealyticum (strain ATCC 43042 / DSM 7109)).